The primary structure comprises 78 residues: NAD(P)H-quinone oxidoreductase subunit L (78 aa).

Helical transmembrane passes span 10–30 (IILIIYAALAGAYFLVMPAIV) and 47–67 (VFMYFLMFLFFPGMLVLSPFL).

It belongs to the complex I NdhL subunit family. NDH-1 can be composed of about 15 different subunits; different subcomplexes with different compositions have been identified which probably have different functions.

It localises to the cellular thylakoid membrane. The enzyme catalyses a plastoquinone + NADH + (n+1) H(+)(in) = a plastoquinol + NAD(+) + n H(+)(out). The catalysed reaction is a plastoquinone + NADPH + (n+1) H(+)(in) = a plastoquinol + NADP(+) + n H(+)(out). Its function is as follows. NDH-1 shuttles electrons from an unknown electron donor, via FMN and iron-sulfur (Fe-S) centers, to quinones in the respiratory and/or the photosynthetic chain. The immediate electron acceptor for the enzyme in this species is believed to be plastoquinone. Couples the redox reaction to proton translocation, and thus conserves the redox energy in a proton gradient. Cyanobacterial NDH-1 also plays a role in inorganic carbon-concentration. This chain is NAD(P)H-quinone oxidoreductase subunit L, found in Trichodesmium erythraeum (strain IMS101).